Here is an 88-residue protein sequence, read N- to C-terminus: Large ribosomal subunit protein eL37 (88 aa).

Cysteine 19, cysteine 22, cysteine 34, and cysteine 37 together coordinate Zn(2+). A C4-type zinc finger spans residues 19-37 (CNRCGKRSFHVQKKTCASC).

The protein belongs to the eukaryotic ribosomal protein eL37 family. It depends on Zn(2+) as a cofactor.

Binds to the 23S rRNA. This is Large ribosomal subunit protein eL37 (RPL37) from Debaryomyces hansenii (strain ATCC 36239 / CBS 767 / BCRC 21394 / JCM 1990 / NBRC 0083 / IGC 2968) (Yeast).